A 63-amino-acid chain; its full sequence is Prokaryotic ubiquitin-like protein Pup (63 aa).

Basic and acidic residues predominate over residues 1–11; the sequence is MAQEQTRRGGG. The tract at residues 1–36 is disordered; sequence MAQEQTRRGGGGDDDEFTSSTSVGQERREKLTEETD. An ARC ATPase binding region spans residues 20-57; that stretch reads STSVGQERREKLTEETDDLLDEIDDVLEENAEDFVRAY. A coiled-coil region spans residues 23–51; it reads VGQERREKLTEETDDLLDEIDDVLEENAE. The residue at position 63 (Q63) is a Deamidated glutamine. Residue Q63 forms an Isoglutamyl lysine isopeptide (Gln-Lys) (interchain with K-? in acceptor proteins) linkage.

It belongs to the prokaryotic ubiquitin-like protein family. As to quaternary structure, strongly interacts with the proteasome-associated ATPase ARC through a hydrophobic interface; the interacting region of Pup lies in its C-terminal half. There is one Pup binding site per ARC hexamer ring. Is modified by deamidation of its C-terminal glutamine to glutamate by the deamidase Dop, a prerequisite to the subsequent pupylation process.

The protein operates within protein degradation; proteasomal Pup-dependent pathway. Its function is as follows. Protein modifier that is covalently attached to lysine residues of substrate proteins, thereby targeting them for proteasomal degradation. The tagging system is termed pupylation. This chain is Prokaryotic ubiquitin-like protein Pup, found in Mycobacterium leprae (strain Br4923).